We begin with the raw amino-acid sequence, 49 residues long: uncharacterized protein (49 aa).

Residues 5-25 traverse the membrane as a helical segment; the sequence is LTTIFSVVIVLAIFLYFGLLI.

This sequence belongs to the plectrovirus ORF12 protein family.

The protein localises to the host membrane. This is an uncharacterized protein from Spiroplasma virus SpV1-R8A2 B (SpV1).